The primary structure comprises 277 residues: Shikimate dehydrogenase (NADP(+)) (277 aa).

Shikimate is bound by residues 17–19 (SRS) and Thr-64. The Proton acceptor role is filled by Lys-68. The shikimate site is built by Asn-88 and Asp-103. NADP(+) is bound by residues 128 to 132 (GAGGS), 152 to 157 (NRTLDR), and Leu-217. Tyr-219 provides a ligand contact to shikimate. Gly-240 serves as a coordination point for NADP(+).

The protein belongs to the shikimate dehydrogenase family. Homodimer.

It catalyses the reaction shikimate + NADP(+) = 3-dehydroshikimate + NADPH + H(+). The protein operates within metabolic intermediate biosynthesis; chorismate biosynthesis; chorismate from D-erythrose 4-phosphate and phosphoenolpyruvate: step 4/7. Functionally, involved in the biosynthesis of the chorismate, which leads to the biosynthesis of aromatic amino acids. Catalyzes the reversible NADPH linked reduction of 3-dehydroshikimate (DHSA) to yield shikimate (SA). The sequence is that of Shikimate dehydrogenase (NADP(+)) from Rhodopseudomonas palustris (strain BisB18).